The sequence spans 137 residues: Proofreading thioesterase EntH (137 aa).

Glu63 serves as the catalytic Nucleophile or proton acceptor.

The protein belongs to the thioesterase PaaI family. In terms of assembly, homotetramer. Dimer of dimers. Interacts specifically with the aryl carrier protein (ArCP) domain of EntB.

The protein resides in the cytoplasm. It functions in the pathway siderophore biosynthesis; enterobactin biosynthesis. In terms of biological role, required for optimal enterobactin synthesis. Acts as a proofreading enzyme that prevents EntB misacylation by hydrolyzing the thioester bound existing between EntB and wrongly charged molecules. This chain is Proofreading thioesterase EntH, found in Salmonella paratyphi B (strain ATCC BAA-1250 / SPB7).